The sequence spans 525 residues: Probable protein kinase UbiB (525 aa).

Positions 118-500 constitute a Protein kinase domain; that stretch reads DFERVPVASA…QKRTNRLLQG (383 aa). ATP-binding positions include 124 to 132 and lysine 150; that span reads VASASIAQV. Aspartate 285 (proton acceptor) is an active-site residue. The helical transmembrane segment at 501–521 threads the bilayer; it reads LLLFGVAVGVGAALARVFLAL.

This sequence belongs to the ABC1 family. UbiB subfamily.

Its subcellular location is the cell inner membrane. The protein operates within cofactor biosynthesis; ubiquinone biosynthesis [regulation]. Its function is as follows. Is probably a protein kinase regulator of UbiI activity which is involved in aerobic coenzyme Q (ubiquinone) biosynthesis. This Paraburkholderia xenovorans (strain LB400) protein is Probable protein kinase UbiB.